Reading from the N-terminus, the 168-residue chain is Protein-export protein SecB (168 aa).

Residues 1 to 10 (MSDQGTNNGE) are compositionally biased toward polar residues. The segment at 1-22 (MSDQGTNNGESGNGGAQNGEAP) is disordered.

It belongs to the SecB family. Homotetramer, a dimer of dimers. One homotetramer interacts with 1 SecA dimer.

It is found in the cytoplasm. Functionally, one of the proteins required for the normal export of preproteins out of the cell cytoplasm. It is a molecular chaperone that binds to a subset of precursor proteins, maintaining them in a translocation-competent state. It also specifically binds to its receptor SecA. The polypeptide is Protein-export protein SecB (Parvibaculum lavamentivorans (strain DS-1 / DSM 13023 / NCIMB 13966)).